The following is a 94-amino-acid chain: MTKSELIAQLAARFPQLVAKDADYAVKMILDAMSDALARGDRIEIRGFGSFALNYRPPRVGRNPKSGEKVHVPEKYVPHFKAGKELRERVDIVE.

Belongs to the bacterial histone-like protein family. As to quaternary structure, heterodimer of an alpha and a beta chain.

Functionally, this protein is one of the two subunits of integration host factor, a specific DNA-binding protein that functions in genetic recombination as well as in transcriptional and translational control. The sequence is that of Integration host factor subunit beta from Azoarcus sp. (strain BH72).